We begin with the raw amino-acid sequence, 359 residues long: uncharacterized protein (359 aa).

Over residues 73 to 88 (AATAGTTPATGASGSA) the composition is skewed to low complexity. Residues 73-93 (AATAGTTPATGASGSARPTDA) form a disordered region. The 176-residue stretch at 179–354 (PSTCRGDNVS…AFSAAIQAGE (176 aa)) folds into the Macro domain.

This is an uncharacterized protein from Mycobacterium tuberculosis (strain ATCC 25618 / H37Rv).